We begin with the raw amino-acid sequence, 1580 residues long: Endoribonuclease Dicer homolog 3 (1580 aa).

The segment covering 1-12 (MHSSLEPEKMEE) has biased composition (basic and acidic residues). The interval 1–22 (MHSSLEPEKMEEGGGSNSLKRK) is disordered. The 173-residue stretch at 51 to 223 (VYEVAKNRNI…SPSNYAAQVS (173 aa)) folds into the Helicase ATP-binding domain. 64 to 71 (LGTGIDKS) contributes to the ATP binding site. The DECH box signature appears at 170–173 (DECH). The region spanning 394–562 (KLKELFHLLD…SCPPPVKNGH (169 aa)) is the Helicase C-terminal domain. The span at 581–597 (EEAASTQTMSDPPSRNE) shows a compositional bias: polar residues. Disordered regions lie at residues 581-601 (EEAASTQTMSDPPSRNEQLPP) and 613-638 (QSNGKEKVASSKSKSSSSAAGSKKRK). The span at 622–633 (SSKSKSSSSAAG) shows a compositional bias: low complexity. In terms of domain architecture, PAZ spans 836–960 (NLIHFANASS…LPPELLARID (125 aa)). RNase III domains lie at 985 to 1157 (ASQL…VSGG) and 1198 to 1340 (LIEL…IDTR). Mg(2+) contacts are provided by Glu-1234, Asp-1326, and Glu-1329.

The protein belongs to the helicase family. Dicer subfamily. As to quaternary structure, interacts with DRB2 and DRB5. It depends on Mg(2+) as a cofactor. Requires Mn(2+) as cofactor.

It localises to the nucleus. It is found in the nucleolus. Its function is as follows. Ribonuclease (RNase) III involved in RNA-mediated post-transcriptional gene silencing (PTGS). Involved in the processing of repeat-associated small interfering RNAs (ra-siRNAs, derived from heterochromatin and DNA repeats such as transposons) by cleaving small dsRNAs into 24 nucleotide ra-siRNAs. Plays a role in antiviral RNA silencing. Involved in the production of viral siRNAs derived from the cabbage leaf curl virus (CaLCuV) and tobacco rattle virus (TRV). Targeted by the viral silencing suppressor (VSR) protein 2b of the cucumber mosaic virus (CMV) that inactivates DCL3 function in RNA silencing. Acts redundantly with DICER-LIKE 1 (DCL1) to promote flowering via repression of FLOWERING LOCUS C (FLC). Does not seem to be involved in microRNAs (miRNAs) processing. This Arabidopsis thaliana (Mouse-ear cress) protein is Endoribonuclease Dicer homolog 3 (DCL3).